A 289-amino-acid chain; its full sequence is Glycine--tRNA ligase alpha subunit (289 aa).

This sequence belongs to the class-II aminoacyl-tRNA synthetase family. Tetramer of two alpha and two beta subunits.

The protein localises to the cytoplasm. It catalyses the reaction tRNA(Gly) + glycine + ATP = glycyl-tRNA(Gly) + AMP + diphosphate. This chain is Glycine--tRNA ligase alpha subunit, found in Rickettsia akari (strain Hartford).